The chain runs to 702 residues: Protein sepa-1 (702 aa).

The interval 39 to 160 is required for self-association and interaction with pgl-3; the sequence is RQRFCYEKTD…KESTSYGQFR (122 aa). 3 short sequence motifs (LIR) span residues 107 to 110, 247 to 250, and 298 to 301; these read FVEV, FQKI, and FGFV. The disordered stretch occupies residues 450 to 471; sequence AKDPEEPTTAASEGGNTYGYQE. Positions 458–468 are enriched in polar residues; the sequence is TAASEGGNTYG. Residues 469–472 carry the LIR 4 motif; it reads YQEL. A coiled-coil region spans residues 508–543; sequence AAMDKKKKRRELKSRLNKINAQIDELEKRRMERAGK. The tract at residues 545–564 is disordered; that stretch reads QVVSSSVPSEEAAQVEAPAS. One can recognise a KIX domain in the interval 597 to 674; the sequence is NTSKEWIVED…TVDQILKKTL (78 aa). A compositionally biased stretch (basic and acidic residues) spans 675–685; it reads KKDQRATEHNH. A disordered region spans residues 675–702; the sequence is KKDQRATEHNHQQPTQSSDELAKNHEKN.

Self-associates. Interacts (via the LIR motifs) with lgg-1; the interaction is direct. Interacts (via the LIR motifs) with lgg-2; the interaction is direct. Interacts with pgl-3; interaction is enhanced in the presence of RNA. Interacts with epg-2; may be modulated by prmt-1. In terms of processing, degraded by autophagy.

The protein resides in the nucleus. The protein localises to the cytoplasm. It localises to the cytoplasmic granule. In terms of biological role, adapter protein that connects P-granules in somatic cells with the autophagic machinery. Association with other adapters such as epg-2 and P-granule components such as pgl-3 is required for the accumulation and degradation of P-granules by autophagy in somatic cells. This ensures exclusive localization of the P-granules in germ cells. The protein is Protein sepa-1 of Caenorhabditis elegans.